A 381-amino-acid polypeptide reads, in one-letter code: Estradiol 17-beta-dehydrogenase 2 (381 aa).

The helical; Signal-anchor for type II membrane protein transmembrane segment at 4-24 threads the bilayer; sequence FSSESAWLCLTATAVLGGMLL. 83–112 is a binding site for NAD(+); it reads QKAVLVTGADSGFGHALAKHLDKLGFTVFA. Serine 220 is a binding site for substrate. Residue tyrosine 233 is the Proton acceptor of the active site.

This sequence belongs to the short-chain dehydrogenases/reductases (SDR) family. Homodimer. As to expression, highly expressed in the placenta, and in the small intestine, and liver.

The protein localises to the endoplasmic reticulum membrane. It carries out the reaction 17beta-estradiol + NAD(+) = estrone + NADH + H(+). The catalysed reaction is testosterone + NAD(+) = androst-4-ene-3,17-dione + NADH + H(+). The enzyme catalyses 17beta-hydroxy-5alpha-androstan-3-one + NAD(+) = 5alpha-androstan-3,17-dione + NADH + H(+). It catalyses the reaction (20S)-hydroxypregn-4-en-3-one + NAD(+) = progesterone + NADH + H(+). Functionally, catalyzes the NAD-dependent oxidation of highly active 17beta-hydroxysteroids, such as estradiol (E2), testosterone (T), and dihydrotestosterone (DHT), to their less active forms and thus regulates the biological potency of these steroids. Oxidizes estradiol to estrone, testosterone to androstenedione, and dihydrotestosterone to 5alpha-androstan-3,17-dione. Also has 20-alpha-HSD activity. The sequence is that of Estradiol 17-beta-dehydrogenase 2 (Hsd17b2) from Rattus norvegicus (Rat).